Consider the following 740-residue polypeptide: Phosphoribosylformylglycinamidine synthase subunit PurL (740 aa).

His-50 is a catalytic residue. Tyr-53 and Lys-92 together coordinate ATP. Glu-94 provides a ligand contact to Mg(2+). Substrate is bound by residues 95-98 (SHNH) and Arg-117. His-96 functions as the Proton acceptor in the catalytic mechanism. Asp-118 provides a ligand contact to Mg(2+). Gln-241 provides a ligand contact to substrate. A Mg(2+)-binding site is contributed by Asp-269. 313–315 (ESQ) is a substrate binding site. ATP is bound by residues Asp-495 and Gly-532. Asn-533 serves as a coordination point for Mg(2+). Ser-535 is a substrate binding site.

It belongs to the FGAMS family. In terms of assembly, monomer. Part of the FGAM synthase complex composed of 1 PurL, 1 PurQ and 2 PurS subunits.

Its subcellular location is the cytoplasm. It catalyses the reaction N(2)-formyl-N(1)-(5-phospho-beta-D-ribosyl)glycinamide + L-glutamine + ATP + H2O = 2-formamido-N(1)-(5-O-phospho-beta-D-ribosyl)acetamidine + L-glutamate + ADP + phosphate + H(+). It participates in purine metabolism; IMP biosynthesis via de novo pathway; 5-amino-1-(5-phospho-D-ribosyl)imidazole from N(2)-formyl-N(1)-(5-phospho-D-ribosyl)glycinamide: step 1/2. Part of the phosphoribosylformylglycinamidine synthase complex involved in the purines biosynthetic pathway. Catalyzes the ATP-dependent conversion of formylglycinamide ribonucleotide (FGAR) and glutamine to yield formylglycinamidine ribonucleotide (FGAM) and glutamate. The FGAM synthase complex is composed of three subunits. PurQ produces an ammonia molecule by converting glutamine to glutamate. PurL transfers the ammonia molecule to FGAR to form FGAM in an ATP-dependent manner. PurS interacts with PurQ and PurL and is thought to assist in the transfer of the ammonia molecule from PurQ to PurL. This chain is Phosphoribosylformylglycinamidine synthase subunit PurL, found in Brucella canis (strain ATCC 23365 / NCTC 10854 / RM-666).